Here is a 124-residue protein sequence, read N- to C-terminus: Ribonuclease pancreatic (124 aa).

Basic and acidic residues predominate over residues 1 to 13 (KETAAAKFERQHM). Residues 1–22 (KETAAAKFERQHMDSSTSAASS) form a disordered region. Positions 7 and 10 each coordinate substrate. His-12 (proton acceptor) is an active-site residue. 4 disulfide bridges follow: Cys-26-Cys-84, Cys-40-Cys-95, Cys-58-Cys-110, and Cys-65-Cys-72. A glycan (N-linked (GlcNAc...) asparagine) is linked at Asn-34. Residues 41 to 45 (KPVNT), Lys-66, and Arg-85 contribute to the substrate site. His-119 acts as the Proton donor in catalysis.

Belongs to the pancreatic ribonuclease family. In terms of assembly, monomer. Interacts with and forms tight 1:1 complexes with RNH1. Dimerization of two such complexes may occur. Interaction with RNH1 inhibits this protein. In terms of tissue distribution, pancreas.

It localises to the secreted. The catalysed reaction is an [RNA] containing cytidine + H2O = an [RNA]-3'-cytidine-3'-phosphate + a 5'-hydroxy-ribonucleotide-3'-[RNA].. The enzyme catalyses an [RNA] containing uridine + H2O = an [RNA]-3'-uridine-3'-phosphate + a 5'-hydroxy-ribonucleotide-3'-[RNA].. Its function is as follows. Endonuclease that catalyzes the cleavage of RNA on the 3' side of pyrimidine nucleotides. Acts on single-stranded and double-stranded RNA. In Bison bison (American bison), this protein is Ribonuclease pancreatic (RNASE1).